The chain runs to 352 residues: Dead end protein homolog 1 (352 aa).

RRM domains follow at residues 58-136 (SEVY…RSTE) and 138-218 (CELT…WLKP). Arginine 336 carries the post-translational modification Omega-N-methylarginine.

In terms of assembly, interacts with APOBEC3. Isoform 1 and isoform 2 are expressed in testis. Isoform 1 is expressed continuously in post natal (PN) testis although levels are low between PN1 to PN6. Isoform 2 is expressed from PN 20 onwards. Isoform 2 is strongly expressed in meiotic and in post-meiotic germ cells of the testis with highest expression at the elongated spermatid stage (at protein level). Expressed in testis and heart. Expressed in germ cells and genital ridges. Not detected in testicular tumors.

It localises to the nucleus. It is found in the cytoplasm. RNA-binding factor that positively regulates gene expression by prohibiting miRNA-mediated gene suppression. Relieves miRNA repression in germline cells. Prohibits the function of several miRNAs by blocking the accessibility of target mRNAs. Sequence-specific RNA-binding factor that binds specifically to U-rich regions (URRs) in the 3' untranslated region (3'-UTR) of several mRNAs. Does not bind to miRNAs. Isoform 1 may play a role during primordial germ cell (PGC) survival. However, does not seem to be essential for PGC migration. The polypeptide is Dead end protein homolog 1 (Dnd1) (Mus musculus (Mouse)).